The sequence spans 372 residues: Glutamate 5-kinase (372 aa).

Position 14 (lysine 14) interacts with ATP. 3 residues coordinate substrate: serine 54, aspartate 141, and asparagine 153. 173–174 contributes to the ATP binding site; that stretch reads TD. One can recognise a PUA domain in the interval 280 to 358; the sequence is RGTVVIDDGA…SQIESLLGYS (79 aa).

This sequence belongs to the glutamate 5-kinase family.

The protein localises to the cytoplasm. It carries out the reaction L-glutamate + ATP = L-glutamyl 5-phosphate + ADP. It participates in amino-acid biosynthesis; L-proline biosynthesis; L-glutamate 5-semialdehyde from L-glutamate: step 1/2. Functionally, catalyzes the transfer of a phosphate group to glutamate to form L-glutamate 5-phosphate. The chain is Glutamate 5-kinase from Methylibium petroleiphilum (strain ATCC BAA-1232 / LMG 22953 / PM1).